Reading from the N-terminus, the 608-residue chain is NADH-quinone oxidoreductase subunit C/D (608 aa).

The tract at residues 1–199 (MSAASSLAPQ…EPFHLSTEKE (199 aa)) is NADH dehydrogenase I subunit C. Residues 223 to 608 (DFMFLNLGPN…IDFVMADVDR (386 aa)) form an NADH dehydrogenase I subunit D region.

In the N-terminal section; belongs to the complex I 30 kDa subunit family. The protein in the C-terminal section; belongs to the complex I 49 kDa subunit family. In terms of assembly, NDH-1 is composed of 13 different subunits. Subunits NuoB, CD, E, F, and G constitute the peripheral sector of the complex.

It localises to the cell inner membrane. It carries out the reaction a quinone + NADH + 5 H(+)(in) = a quinol + NAD(+) + 4 H(+)(out). In terms of biological role, NDH-1 shuttles electrons from NADH, via FMN and iron-sulfur (Fe-S) centers, to quinones in the respiratory chain. The immediate electron acceptor for the enzyme in this species is believed to be ubiquinone. Couples the redox reaction to proton translocation (for every two electrons transferred, four hydrogen ions are translocated across the cytoplasmic membrane), and thus conserves the redox energy in a proton gradient. The sequence is that of NADH-quinone oxidoreductase subunit C/D from Nitrosospira multiformis (strain ATCC 25196 / NCIMB 11849 / C 71).